A 348-amino-acid chain; its full sequence is Type IV methyl-directed restriction enzyme EcoKMcrBC (348 aa).

Functionally, modifies the specificity of McrB restriction by expanding the range of modified sequences restricted. Does not bind to DNA. This Escherichia coli (strain K12) protein is Type IV methyl-directed restriction enzyme EcoKMcrBC (mcrC).